Consider the following 246-residue polypeptide: Nodulation protein G (246 aa).

8–32 (VTGAMGGLGTAICQALAKDGCIVAA) provides a ligand contact to NAD(+). Residue Ser140 participates in substrate binding. The active-site Proton acceptor is Tyr153.

This sequence belongs to the short-chain dehydrogenases/reductases (SDR) family.

Proposed to modify Nod factor fatty acyl chain. This is Nodulation protein G (nodG) from Azospirillum brasilense.